The following is a 424-amino-acid chain: Homoserine O-succinyltransferase (424 aa).

An AB hydrolase-1 domain is found at 67–381; sequence NAVLVCHALN…PHGHDAFLLD (315 aa). Serine 173 functions as the Nucleophile in the catalytic mechanism. Arginine 243 provides a ligand contact to substrate. Residues aspartate 342 and histidine 375 contribute to the active site. Aspartate 376 is a substrate binding site.

It belongs to the AB hydrolase superfamily. MetX family. Homodimer.

The protein resides in the cytoplasm. It catalyses the reaction L-homoserine + succinyl-CoA = O-succinyl-L-homoserine + CoA. It functions in the pathway amino-acid biosynthesis; L-methionine biosynthesis via de novo pathway; O-succinyl-L-homoserine from L-homoserine: step 1/1. In terms of biological role, transfers a succinyl group from succinyl-CoA to L-homoserine, forming succinyl-L-homoserine. In vitro, also has serine succinyl transferase activity. This is Homoserine O-succinyltransferase from Bordetella petrii (strain ATCC BAA-461 / DSM 12804 / CCUG 43448).